The following is a 1588-amino-acid chain: Pentafunctional AROM polypeptide (1588 aa).

Residues 1-392 (MVQLAKVPIL…YGDSAQFVSD (392 aa)) form a 3-dehydroquinate synthase region. NAD(+)-binding positions include 43-45 (DTN), 78-81 (ETSK), 109-111 (GGV), and D114. 7-phospho-2-dehydro-3-deoxy-D-arabino-heptonate is bound at residue R125. 134-135 (TS) contacts NAD(+). D141 and K147 together coordinate 7-phospho-2-dehydro-3-deoxy-D-arabino-heptonate. An NAD(+)-binding site is contributed by K156. N157 lines the 7-phospho-2-dehydro-3-deoxy-D-arabino-heptonate pocket. NAD(+)-binding positions include 174 to 177 (WLET) and N185. E189 is a Zn(2+) binding site. 7-phospho-2-dehydro-3-deoxy-D-arabino-heptonate contacts are provided by residues 189–192 (EVIK) and K258. E268 functions as the Proton acceptor; for 3-dehydroquinate synthase activity in the catalytic mechanism. Residues 272–276 (RNLLN) and H279 contribute to the 7-phospho-2-dehydro-3-deoxy-D-arabino-heptonate site. A Zn(2+)-binding site is contributed by H279. Catalysis depends on H283, which acts as the Proton acceptor; for 3-dehydroquinate synthase activity. 7-phospho-2-dehydro-3-deoxy-D-arabino-heptonate-binding residues include H295 and K364. H295 is a binding site for Zn(2+). Residues 405–871 (VYPFKDIPAD…WDVLHSELGA (467 aa)) form an EPSP synthase region. The active-site For EPSP synthase activity is C853. The tract at residues 890–1080 (SVVIIGMRAA…IPSGRSAFVC (191 aa)) is shikimate kinase. Residue 895–902 (GMRAAGKT) coordinates ATP. The 3-dehydroquinase stretch occupies residues 1081–1293 (LTFDDLTEQT…AAPGQLTVAQ (213 aa)). H1198 serves as the catalytic Proton acceptor; for 3-dehydroquinate dehydratase activity. Catalysis depends on K1227, which acts as the Schiff-base intermediate with substrate; for 3-dehydroquinate dehydratase activity. A shikimate dehydrogenase region spans residues 1306–1588 (PKELFVVGKP…KAIFDAVTKE (283 aa)).

This sequence in the N-terminal section; belongs to the sugar phosphate cyclases superfamily. Dehydroquinate synthase family. In the 2nd section; belongs to the EPSP synthase family. The protein in the 3rd section; belongs to the shikimate kinase family. It in the 4th section; belongs to the type-I 3-dehydroquinase family. This sequence in the C-terminal section; belongs to the shikimate dehydrogenase family. In terms of assembly, homodimer. It depends on Zn(2+) as a cofactor.

The protein localises to the cytoplasm. The catalysed reaction is 7-phospho-2-dehydro-3-deoxy-D-arabino-heptonate = 3-dehydroquinate + phosphate. It catalyses the reaction 3-dehydroquinate = 3-dehydroshikimate + H2O. It carries out the reaction shikimate + NADP(+) = 3-dehydroshikimate + NADPH + H(+). The enzyme catalyses shikimate + ATP = 3-phosphoshikimate + ADP + H(+). The catalysed reaction is 3-phosphoshikimate + phosphoenolpyruvate = 5-O-(1-carboxyvinyl)-3-phosphoshikimate + phosphate. It functions in the pathway metabolic intermediate biosynthesis; chorismate biosynthesis; chorismate from D-erythrose 4-phosphate and phosphoenolpyruvate: step 2/7. It participates in metabolic intermediate biosynthesis; chorismate biosynthesis; chorismate from D-erythrose 4-phosphate and phosphoenolpyruvate: step 3/7. Its pathway is metabolic intermediate biosynthesis; chorismate biosynthesis; chorismate from D-erythrose 4-phosphate and phosphoenolpyruvate: step 4/7. The protein operates within metabolic intermediate biosynthesis; chorismate biosynthesis; chorismate from D-erythrose 4-phosphate and phosphoenolpyruvate: step 5/7. It functions in the pathway metabolic intermediate biosynthesis; chorismate biosynthesis; chorismate from D-erythrose 4-phosphate and phosphoenolpyruvate: step 6/7. The AROM polypeptide catalyzes 5 consecutive enzymatic reactions in prechorismate polyaromatic amino acid biosynthesis. In Saccharomyces cerevisiae (strain JAY291) (Baker's yeast), this protein is Pentafunctional AROM polypeptide.